We begin with the raw amino-acid sequence, 49 residues long: Large ribosomal subunit protein bL33A (49 aa).

The protein belongs to the bacterial ribosomal protein bL33 family.

This Staphylococcus aureus (strain COL) protein is Large ribosomal subunit protein bL33A.